The chain runs to 210 residues: Glutathione S-transferase P (210 aa).

The 80-residue stretch at 2–81 (PPYTIVYFPV…HLGRSLGLYG (80 aa)) folds into the GST N-terminal domain. Phosphotyrosine; by EGFR is present on Tyr4. Glutathione contacts are provided by residues Tyr8, Arg14, Trp39, Lys45, 52–53 (QL), and 65–66 (QS). The GST C-terminal domain occupies 83–204 (DQKEAALVDM…SSPDHVNRPI (122 aa)). Lys103 and Lys116 each carry N6-succinyllysine. N6-acetyllysine is present on Lys128.

The protein belongs to the GST superfamily. Pi family. Homodimer. Interacts with CDK5.

It is found in the cytoplasm. The protein localises to the mitochondrion. Its subcellular location is the nucleus. It carries out the reaction RX + glutathione = an S-substituted glutathione + a halide anion + H(+). The enzyme catalyses prostaglandin J2 + glutathione = prostaglandin J2-S-(R)-glutathione. It catalyses the reaction prostaglandin J2 + glutathione = prostaglandin J2-S-(S)-glutathione. The catalysed reaction is prostaglandin A2 + glutathione = prostaglandin A2-S-(S)-glutathione. It carries out the reaction 11(S)-hydroxy-14(S),15(S)-epoxy-(5Z,8Z,12E)-eicosatrienoate + glutathione = (11S,15S)-dihydroxy-14(R)-S-glutathionyl-(5Z,8Z,12E)-eicosatrienoate. Its function is as follows. Conjugation of reduced glutathione to a wide number of exogenous and endogenous hydrophobic electrophiles. Involved in the formation of glutathione conjugates of both prostaglandin A2 (PGA2) and prostaglandin J2 (PGJ2). Participates in the formation of novel hepoxilin regioisomers. Negatively regulates CDK5 activity via p25/p35 translocation to prevent neurodegeneration. The polypeptide is Glutathione S-transferase P (GSTP1) (Mesocricetus auratus (Golden hamster)).